A 574-amino-acid chain; its full sequence is Membrane protein insertase YidC (574 aa).

A run of 6 helical transmembrane segments spans residues V6–E26, V350–L370, F376–Y396, G447–V467, F491–P511, and P525–V545.

This sequence belongs to the OXA1/ALB3/YidC family. Type 1 subfamily. In terms of assembly, interacts with the Sec translocase complex via SecD. Specifically interacts with transmembrane segments of nascent integral membrane proteins during membrane integration.

Its subcellular location is the cell inner membrane. Functionally, required for the insertion and/or proper folding and/or complex formation of integral membrane proteins into the membrane. Involved in integration of membrane proteins that insert both dependently and independently of the Sec translocase complex, as well as at least some lipoproteins. Aids folding of multispanning membrane proteins. The sequence is that of Membrane protein insertase YidC from Xanthomonas oryzae pv. oryzae (strain KACC10331 / KXO85).